Consider the following 98-residue polypeptide: Venom toxin OcyC11 (98 aa).

Positions 1–20 (MKIACTLVLFVMLRCYVNAR) are cleaved as a signal peptide.

In terms of processing, contains 4 disulfide bonds. Expressed by the venom gland.

Its subcellular location is the secreted. The chain is Venom toxin OcyC11 from Opisthacanthus cayaporum (South American scorpion).